A 403-amino-acid polypeptide reads, in one-letter code: Large ribosomal subunit protein uL3 (403 aa).

Positions 1–38 (MSHRKFSAPRHGSLGFLPRKRSSRHRGKVKSFPKDDSS) are disordered. At Ser-13 the chain carries Phosphoserine. The segment covering 18–31 (PRKRSSRHRGKVKS) has biased composition (basic residues). Lys-39 is covalently cross-linked (Glycyl lysine isopeptide (Lys-Gly) (interchain with G-Cter in SUMO2)). Lys-136 carries the N6-acetyllysine modification. Residues Lys-224 and Lys-226 each participate in a glycyl lysine isopeptide (Lys-Gly) (interchain with G-Cter in SUMO2) cross-link. Position 245 is a tele-methylhistidine (His-245). N6-acetyllysine; alternate is present on residues Lys-286 and Lys-294. Residue Lys-286 forms a Glycyl lysine isopeptide (Lys-Gly) (interchain with G-Cter in SUMO2); alternate linkage. Residue Lys-294 forms a Glycyl lysine isopeptide (Lys-Gly) (interchain with G-Cter in SUMO1); alternate linkage. Phosphoserine is present on Ser-304. The residue at position 366 (Lys-366) is an N6-acetyllysine; alternate. A Glycyl lysine isopeptide (Lys-Gly) (interchain with G-Cter in SUMO2); alternate cross-link involves residue Lys-366. Lys-373 carries the N6-acetyllysine modification. Glycyl lysine isopeptide (Lys-Gly) (interchain with G-Cter in SUMO2) cross-links involve residues Lys-386, Lys-393, and Lys-399.

It belongs to the universal ribosomal protein uL3 family. Component of the large ribosomal subunit. Interacts with DHX33. Constitutively monomethylated at His-245 by METTL18. Methylation at His-245 regulates translation elongation by slowing ribosome traversal on tyrosine codons: slower elongation provides enough time for proper folding of synthesized proteins and prevents cellular aggregation of tyrosine-rich proteins It is not required for incorporation of RPL3 into ribosomes.

The protein resides in the nucleus. It localises to the nucleolus. Its subcellular location is the cytoplasm. Component of the large ribosomal subunit. The ribosome is a large ribonucleoprotein complex responsible for the synthesis of proteins in the cell. In Bos taurus (Bovine), this protein is Large ribosomal subunit protein uL3 (RPL3).